Reading from the N-terminus, the 331-residue chain is MTLSIRHDWTTEEIQTLLELPLMELLWEAQTVHRKANPGYRVQLASLLSVKTGGCEEDCAYCSQSIHNSSDVTAFEAQMQVEPVLQRARAAKEAGADRFCMGWAWREIRDGAPFEAMLEMVRGVRGMGMEACVTAGMLTDQQAERLAEAGLTAYNHNLDTSPEHYDRIISTRTYQERLETLERVRKAGVTLCCGGIIGMGETLRDRASMLQVLASMNPHPESVPVNGLVAVEGTPLEDQAPFEPLELVRMVATARILMPHARVRLSAGRESMSREAQILCLQAGADSIFYGDVLLTTGNPDVEADRQLLSDAGVTANWQEETAAPVNCSPR.

The Radical SAM core domain occupies 40–269 (YRVQLASLLS…HARVRLSAGR (230 aa)). Residues Cys55, Cys59, and Cys62 each coordinate [4Fe-4S] cluster. 4 residues coordinate [2Fe-2S] cluster: Cys100, Cys132, Cys192, and Arg264.

This sequence belongs to the radical SAM superfamily. Biotin synthase family. Homodimer. [4Fe-4S] cluster serves as cofactor. The cofactor is [2Fe-2S] cluster.

The enzyme catalyses (4R,5S)-dethiobiotin + (sulfur carrier)-SH + 2 reduced [2Fe-2S]-[ferredoxin] + 2 S-adenosyl-L-methionine = (sulfur carrier)-H + biotin + 2 5'-deoxyadenosine + 2 L-methionine + 2 oxidized [2Fe-2S]-[ferredoxin]. It participates in cofactor biosynthesis; biotin biosynthesis; biotin from 7,8-diaminononanoate: step 2/2. Its function is as follows. Catalyzes the conversion of dethiobiotin (DTB) to biotin by the insertion of a sulfur atom into dethiobiotin via a radical-based mechanism. The sequence is that of Biotin synthase from Synechococcus sp. (strain CC9605).